Reading from the N-terminus, the 401-residue chain is cAMP-dependent protein kinase type II-alpha regulatory subunit (401 aa).

N-acetylserine is present on Ser-2. Residues 2–135 (SHIQIPPGLT…RLQEACKDIL (134 aa)) are dimerization and phosphorylation. A phosphoserine mark is found at Ser-47, Ser-74, Ser-76, and Ser-96. Residues 61–83 (ESSAVPVIEEDGESDSDSEDADL) form a disordered region. Acidic residues predominate over residues 68–83 (IEEDGESDSDSEDADL). 3',5'-cyclic AMP contacts are provided by residues 136-257 (LFKN…ESVP), Glu-205, Arg-214, 258-401 (LFKS…DPGQ), Glu-335, and Arg-344. A Phosphothreonine; by PDPK1 modification is found at Thr-212. Residues Ser-347 and Ser-392 each carry the phosphoserine modification.

Belongs to the cAMP-dependent kinase regulatory chain family. In terms of assembly, the inactive form of the enzyme is composed of two regulatory chains and two catalytic chains. Activation by cAMP produces two active catalytic monomers and a regulatory dimer that binds four cAMP molecules. Interacts with AKAP4. Interacts with CBFA2T3. Interacts with the phosphorylated form of PJA2. Interacts with MYRIP. This interaction may link PKA to components of the exocytosis machinery, thus facilitating exocytosis, including insulin release. Forms a complex composed of PRKAR2A, GSK3B and GSKIP through GSKIP interaction; facilitates PKA-induced phosphorylation and regulates GSK3B activity. Interacts with ADCY8; inhibits adenylate cyclase activity through PKA phosphorylation. Phosphorylated by the activated catalytic chain. As to expression, four types of regulatory chains are found: I-alpha, I-beta, II-alpha, and II-beta. Their expression varies among tissues and is in some cases constitutive and in others inducible.

It is found in the cytoplasm. The protein localises to the cell membrane. In terms of biological role, regulatory subunit of the cAMP-dependent protein kinases involved in cAMP signaling in cells. Type II regulatory chains mediate membrane association by binding to anchoring proteins, including the MAP2 kinase. The chain is cAMP-dependent protein kinase type II-alpha regulatory subunit (Prkar2a) from Mus musculus (Mouse).